We begin with the raw amino-acid sequence, 265 residues long: Cytochrome c oxidase subunit 3 (265 aa).

Helical transmembrane passes span 41 to 61, 85 to 105, 137 to 157, 162 to 182, 200 to 220, and 245 to 265; these read GGAR…FVWW, GFIL…WAFF, TLIL…ILAG, AVYA…FQGM, FFLA…FLII, and WHFV…WGGI.

It belongs to the cytochrome c oxidase subunit 3 family. In terms of assembly, component of the cytochrome c oxidase (complex IV, CIV), a multisubunit enzyme composed of a catalytic core of 3 subunits and several supernumerary subunits. The complex exists as a monomer or a dimer and forms supercomplexes (SCs) in the inner mitochondrial membrane with ubiquinol-cytochrome c oxidoreductase (cytochrome b-c1 complex, complex III, CIII).

It localises to the mitochondrion inner membrane. The catalysed reaction is 4 Fe(II)-[cytochrome c] + O2 + 8 H(+)(in) = 4 Fe(III)-[cytochrome c] + 2 H2O + 4 H(+)(out). Its function is as follows. Component of the cytochrome c oxidase, the last enzyme in the mitochondrial electron transport chain which drives oxidative phosphorylation. The respiratory chain contains 3 multisubunit complexes succinate dehydrogenase (complex II, CII), ubiquinol-cytochrome c oxidoreductase (cytochrome b-c1 complex, complex III, CIII) and cytochrome c oxidase (complex IV, CIV), that cooperate to transfer electrons derived from NADH and succinate to molecular oxygen, creating an electrochemical gradient over the inner membrane that drives transmembrane transport and the ATP synthase. Cytochrome c oxidase is the component of the respiratory chain that catalyzes the reduction of oxygen to water. Electrons originating from reduced cytochrome c in the intermembrane space (IMS) are transferred via the dinuclear copper A center (CU(A)) of subunit 2 and heme A of subunit 1 to the active site in subunit 1, a binuclear center (BNC) formed by heme A3 and copper B (CU(B)). The BNC reduces molecular oxygen to 2 water molecules using 4 electrons from cytochrome c in the IMS and 4 protons from the mitochondrial matrix. This is Cytochrome c oxidase subunit 3 (COX3) from Arabidopsis thaliana (Mouse-ear cress).